A 512-amino-acid chain; its full sequence is Bifunctional purine biosynthesis protein PurH (512 aa).

Residues 1–150 (MIGEERVVRA…KNFPAVLVLV (150 aa)) enclose the MGS-like domain.

Belongs to the PurH family.

It carries out the reaction (6R)-10-formyltetrahydrofolate + 5-amino-1-(5-phospho-beta-D-ribosyl)imidazole-4-carboxamide = 5-formamido-1-(5-phospho-D-ribosyl)imidazole-4-carboxamide + (6S)-5,6,7,8-tetrahydrofolate. The enzyme catalyses IMP + H2O = 5-formamido-1-(5-phospho-D-ribosyl)imidazole-4-carboxamide. It functions in the pathway purine metabolism; IMP biosynthesis via de novo pathway; 5-formamido-1-(5-phospho-D-ribosyl)imidazole-4-carboxamide from 5-amino-1-(5-phospho-D-ribosyl)imidazole-4-carboxamide (10-formyl THF route): step 1/1. It participates in purine metabolism; IMP biosynthesis via de novo pathway; IMP from 5-formamido-1-(5-phospho-D-ribosyl)imidazole-4-carboxamide: step 1/1. The chain is Bifunctional purine biosynthesis protein PurH from Chloroflexus aurantiacus (strain ATCC 29366 / DSM 635 / J-10-fl).